A 221-amino-acid polypeptide reads, in one-letter code: Ras-related protein Rab-28 (221 aa).

Residue serine 2 is modified to N-acetylserine. Serine 8 carries the phosphoserine modification. Positions 21, 24, 25, 26, 27, 38, 39, 41, and 44 each coordinate GTP. Threonine 26 provides a ligand contact to Mg(2+). The tract at residues 35–49 (ETFGKQYKQTIGLDF) is switch I. The Mg(2+) site is built by threonine 44 and aspartate 68. Positions 68-85 (DIGGQTIGGKMLDKYIYG) are switch II. The GTP site is built by glycine 71, asparagine 129, lysine 130, aspartate 132, alanine 160, and lysine 161. Cysteine 218 is modified (cysteine methyl ester). Cysteine 218 carries S-farnesyl cysteine lipidation. A propeptide spans 219-221 (AVQ) (removed in mature form).

This sequence belongs to the small GTPase superfamily. Rab family. In terms of assembly, interacts (prenylated form) with PDE6D; the interaction promotes RAB28 delivery to the photoreceptor outer segments. Interacts with KCNJ13; the interaction may facilitate cone outer segments phagocytosis. Interacts with RELA; the interaction contributes to RELA transport from cytoplasm to nucleus. Mg(2+) is required as a cofactor. In terms of processing, isoprenylated.

It is found in the cell membrane. The protein localises to the cytoplasm. The protein resides in the cytoskeleton. Its subcellular location is the cilium basal body. It localises to the nucleus. The enzyme catalyses GTP + H2O = GDP + phosphate + H(+). Regulated by guanine nucleotide exchange factors (GEFs) which promote the exchange of bound GDP for free GTP. Regulated by GTPase activating proteins (GAPs) which increase the GTP hydrolysis activity. Inhibited by GDP dissociation inhibitors (GDIs). In terms of biological role, the small GTPases Rab are key regulators of intracellular membrane trafficking, from the formation of transport vesicles to their fusion with membranes. Rabs cycle between an inactive GDP-bound form and an active GTP-bound form that is able to recruit to membranes different sets of downstream effectors directly responsible for vesicle formation, movement, tethering and fusion. RAB28 is required for shedding and phagocytosis of cone cell outer segments (OS) discs in the retina. Also participates in nuclear factor kappa-B p65/RELA nuclear transport in endothelial cells. The polypeptide is Ras-related protein Rab-28 (RAB28) (Bos taurus (Bovine)).